The sequence spans 228 residues: Protein LIAT1 (228 aa).

The tract at residues methionine 1 to asparagine 108 is disordered. Positions tyrosine 12–alanine 24 are enriched in acidic residues. Residues lysine 49–lysine 71 form a lysine-rich domain region. Residues arginine 50 to glycine 63 show a composition bias toward basic residues. Over residues leucine 90–asparagine 108 the composition is skewed to basic and acidic residues. Residues proline 113–tyrosine 165 are interaction with ATE1. Repeat 1 spans residues alanine 169–cysteine 178.

As to quaternary structure, self-associates (via Lys-rich domain); targets LIAT1 to the nucleolus. Interacts with ATE1; it is not a substrate of ATE1, the interaction takes place in the cytoplasm and seems to increase ATE1 arginyltransferase activity. Interacts with JMJD6 and MRPS14. Post-translationally modified by JMJD6 lysyl-hydroxylase activity at its Lys-rich domain, which inhibits its self-association and nucleolar localization. As to expression, highly expressed in spleen, thymus, liver and brown adipose tissue. Moderately expressed in liver, testis and lung.

It is found in the nucleus. The protein localises to the nucleolus. The protein resides in the cytoplasm. Participates in nucleolar liquid-liquid phase separation (LLPS) through its N-terminal intrinsically disordered region (IDR). May be involved in ATE1-mediated N-terminal arginylation. In Mus musculus (Mouse), this protein is Protein LIAT1.